A 229-amino-acid chain; its full sequence is Vitellogenin (229 aa).

Positions 1–136 (IVMLKNDNVE…SWILAAESCR (136 aa)) constitute a VWFD domain. Asn-198 is a glycosylation site (N-linked (GlcNAc...) asparagine).

In terms of tissue distribution, expressed in liver, ovary and, to a lesser extent, in muscle, intestine, skin, kidney and heart.

Functionally, precursor of the egg-yolk proteins that are sources of nutrients during early development of oviparous organisms. In terms of biological role, probably binds tetrodotoxin in the ovary. The sequence is that of Vitellogenin from Takifugu pardalis (Panther puffer).